Reading from the N-terminus, the 206-residue chain is dCTP deaminase, dUMP-forming (206 aa).

DCTP is bound by residues 117–122, D135, 143–145, Q163, Y177, K184, and Q188; these read RSSFGR and TLE. E145 serves as the catalytic Proton donor/acceptor.

It belongs to the dCTP deaminase family. Homotrimer.

It catalyses the reaction dCTP + 2 H2O = dUMP + NH4(+) + diphosphate. Its pathway is pyrimidine metabolism; dUMP biosynthesis; dUMP from dCTP: step 1/1. Its function is as follows. Bifunctional enzyme that catalyzes both the deamination of dCTP to dUTP and the hydrolysis of dUTP to dUMP without releasing the toxic dUTP intermediate. The protein is dCTP deaminase, dUMP-forming of Methanococcus maripaludis (strain DSM 14266 / JCM 13030 / NBRC 101832 / S2 / LL).